The primary structure comprises 61 residues: Putative antitoxin RelB2 (61 aa).

Its function is as follows. Antitoxin component of a type II toxin-antitoxin (TA) system. Its cognate toxin is RelE2 (Potential). The chain is Putative antitoxin RelB2 (relB2) from Methanocaldococcus jannaschii (strain ATCC 43067 / DSM 2661 / JAL-1 / JCM 10045 / NBRC 100440) (Methanococcus jannaschii).